Reading from the N-terminus, the 78-residue chain is UPF0335 protein A1C_00850 (78 aa).

It belongs to the UPF0335 family.

In Rickettsia akari (strain Hartford), this protein is UPF0335 protein A1C_00850.